A 381-amino-acid chain; its full sequence is Chymosin (381 aa).

A signal peptide spans 1-16; that stretch reads MRCLVVLLAVFALSQG. Residues 17-58 constitute a propeptide, activation peptide; that stretch reads AEITRIPLYKGKPLRKALKERGLLEDFLQKQQYGVSSEYSGF. Residues 74-378 form the Peptidase A1 domain; the sequence is YFGKIYLGTP…DRANNLVGLA (305 aa). Residue Asp-92 is part of the active site. 2 cysteine pairs are disulfide-bonded: Cys-105/Cys-110 and Cys-265/Cys-269. The active site involves Asp-274. A disulfide bridge links Cys-308 with Cys-341.

The protein belongs to the peptidase A1 family. Monomer.

It carries out the reaction Broad specificity similar to that of pepsin A. Clots milk by cleavage of a single 104-Ser-Phe-|-Met-Ala-107 bond in kappa-chain of casein.. Chymosin is synthesized in the mucosa of the stomach. The enzyme hydrolyzes casein to paracasein. This chain is Chymosin (CYM), found in Ovis aries (Sheep).